A 124-amino-acid chain; its full sequence is UPF0375 protein Y45F10C.4 (124 aa).

The N-terminal stretch at Met-1–Ser-23 is a signal peptide. N-linked (GlcNAc...) asparagine glycosylation is found at Asn-36 and Asn-62.

The protein belongs to the UPF0375 family.

Its subcellular location is the secreted. This is UPF0375 protein Y45F10C.4 from Caenorhabditis elegans.